The following is a 556-amino-acid chain: Putative cysteine ligase BshC (556 aa).

Coiled coils occupy residues 408–442 and 468–513; these read ILQKHELTLDDAFHRLDDLRQELLEREDRLGIAQA and LGQV…ANLT.

It belongs to the BshC family.

Involved in bacillithiol (BSH) biosynthesis. May catalyze the last step of the pathway, the addition of cysteine to glucosamine malate (GlcN-Mal) to generate BSH. This Symbiobacterium thermophilum (strain DSM 24528 / JCM 14929 / IAM 14863 / T) protein is Putative cysteine ligase BshC.